The sequence spans 402 residues: Type II NADH:quinone oxidoreductase (402 aa).

FAD is bound by residues 12-16 (GAGYA), 39-40 (NK), and Val-83. Glu-172 is a catalytic residue. Residues Asp-302, 319-320 (AQ), and Lys-379 each bind FAD.

It belongs to the NADH dehydrogenase family. It depends on FAD as a cofactor.

Its subcellular location is the cell membrane. The catalysed reaction is a quinone + NADH + H(+) = a quinol + NAD(+). In terms of biological role, alternative, nonproton pumping NADH:quinone oxidoreductase that delivers electrons to the respiratory chain by oxidation of NADH and reduction of quinones, and contributes to the regeneration of NAD(+). This is Type II NADH:quinone oxidoreductase from Staphylococcus haemolyticus (strain JCSC1435).